The chain runs to 177 residues: Large ribosomal subunit protein uL6 (177 aa).

This sequence belongs to the universal ribosomal protein uL6 family. Part of the 50S ribosomal subunit.

This protein binds to the 23S rRNA, and is important in its secondary structure. It is located near the subunit interface in the base of the L7/L12 stalk, and near the tRNA binding site of the peptidyltransferase center. This is Large ribosomal subunit protein uL6 from Salmonella dublin (strain CT_02021853).